A 272-amino-acid polypeptide reads, in one-letter code: Bifunctional protein FolD (272 aa).

NADP(+)-binding positions include glycine 155–serine 157, serine 182, and isoleucine 223.

Belongs to the tetrahydrofolate dehydrogenase/cyclohydrolase family. In terms of assembly, homodimer.

The catalysed reaction is (6R)-5,10-methylene-5,6,7,8-tetrahydrofolate + NADP(+) = (6R)-5,10-methenyltetrahydrofolate + NADPH. It catalyses the reaction (6R)-5,10-methenyltetrahydrofolate + H2O = (6R)-10-formyltetrahydrofolate + H(+). The protein operates within one-carbon metabolism; tetrahydrofolate interconversion. Functionally, catalyzes the oxidation of 5,10-methylenetetrahydrofolate to 5,10-methenyltetrahydrofolate and then the hydrolysis of 5,10-methenyltetrahydrofolate to 10-formyltetrahydrofolate. This chain is Bifunctional protein FolD, found in Fervidobacterium nodosum (strain ATCC 35602 / DSM 5306 / Rt17-B1).